A 66-amino-acid chain; its full sequence is Large ribosomal subunit protein uL29 (66 aa).

The protein belongs to the universal ribosomal protein uL29 family.

The protein is Large ribosomal subunit protein uL29 of Nitrosococcus oceani (strain ATCC 19707 / BCRC 17464 / JCM 30415 / NCIMB 11848 / C-107).